A 38-amino-acid polypeptide reads, in one-letter code: Large ribosomal subunit protein bL36 (38 aa).

This sequence belongs to the bacterial ribosomal protein bL36 family.

In Roseiflexus sp. (strain RS-1), this protein is Large ribosomal subunit protein bL36.